A 190-amino-acid polypeptide reads, in one-letter code: UPF0340 protein BT9727_4999 (190 aa).

This sequence belongs to the UPF0340 family.

The chain is UPF0340 protein BT9727_4999 from Bacillus thuringiensis subsp. konkukian (strain 97-27).